A 919-amino-acid polypeptide reads, in one-letter code: Glutamate receptor ionotropic, kainate 3 (919 aa).

The signal sequence occupies residues 1-31 (MTAPWRRLRSLVWEYWAGFLVCAFWIPDSRG). Residues 32 to 563 (MPHVIRIGGI…VFSFLNPLSP (532 aa)) are Extracellular-facing. Asn70, Asn76, Asn278, Asn381, Asn415, Asn426, and Asn433 each carry an N-linked (GlcNAc...) asparagine glycan. Cys99 and Cys350 are disulfide-bonded. Pro518, Thr520, and Arg525 together coordinate L-glutamate. Residues Asn548 and Asn551 are each glycosylated (N-linked (GlcNAc...) asparagine). A helical transmembrane segment spans residues 564-584 (DIWMYVLLAYLGVSCVLFVIA). Over 585–636 (RFSPYEWYDAHPCNPGSEVVENNFTLLNSFWFGMGSLMQQGSELMPKALSTR) the chain is Cytoplasmic. Residues 637–657 (IIGGIWWFFTLIIISSYTANL) traverse the membrane as a helical segment. Over 658–820 (AAFLTVERME…KEASALGIQK (163 aa)) the chain is Extracellular. Ala691, Thr692, and Glu739 together coordinate L-glutamate. Asn752 carries N-linked (GlcNAc...) asparagine glycosylation. A helical membrane pass occupies residues 821 to 841 (IGGIFIVLAAGLVLSVLVAVG). Topologically, residues 842–919 (EFIYKLRKTA…CSTSLAPVFP (78 aa)) are cytoplasmic. At Ser869 the chain carries Phosphoserine. Residue Lys887 forms a Glycyl lysine isopeptide (Lys-Gly) (interchain with G-Cter in SUMO1) linkage.

It belongs to the glutamate-gated ion channel (TC 1.A.10.1) family. GRIK3 subfamily. In terms of assembly, homotetramer, and heterotetramer with GRIK4 or GRIK5. Can form functional heteromeric receptors with GRIK2. Interacts with PRKCABP. Interacts with NETO2. As to quaternary structure, homomeric GluR7A forms functional kainate receptors which have very low sensitivity to glutamate. Can form functional heteromeric receptors with GRIK4 and GRIK5. Homomeric GluR7B forms functional kainate receptors. In terms of processing, mass spectrometry data suggest the protein is N-glycosylated at five distinct sites. In terms of tissue distribution, expressed in the olfactory bulb (at protein level). Expressed in the deep cortical layers, dentate gyrus, reticular thalamic nucleus, mammillary bodies, pons, and cerebellum of the adult.

Its subcellular location is the cell membrane. It localises to the postsynaptic cell membrane. It carries out the reaction Ca(2+)(in) = Ca(2+)(out). Its function is as follows. Ionotropic glutamate receptor that functions as a cation-permeable ligand-gated ion channel, gated by L-glutamate and the glutamatergic agonist kainic acid. Binding of the excitatory neurotransmitter L-glutamate induces a conformation change, leading to the opening of the cation channel, and thereby converts the chemical signal to an electrical impulse. The receptor then desensitizes rapidly and enters a transient inactive state, characterized by the presence of bound agonist. In association with GRIK2, involved in presynaptic facilitation of glutamate release at hippocampal mossy fiber synapses. Functionally, ionotropic glutamate receptor that functions as a ligand-gated cation channel, gated by L-glutamate and the glutamatergic agonist kainic acid. This chain is Glutamate receptor ionotropic, kainate 3 (Grik3), found in Rattus norvegicus (Rat).